The primary structure comprises 248 residues: Triosephosphate isomerase (248 aa).

Substrate contacts are provided by Asn10 and Lys12. Residue His95 is the Electrophile of the active site. The Proton acceptor role is filled by Glu165.

The protein belongs to the triosephosphate isomerase family. As to quaternary structure, homodimer.

It catalyses the reaction D-glyceraldehyde 3-phosphate = dihydroxyacetone phosphate. It functions in the pathway carbohydrate biosynthesis; gluconeogenesis. It participates in carbohydrate degradation; glycolysis; D-glyceraldehyde 3-phosphate from glycerone phosphate: step 1/1. The sequence is that of Triosephosphate isomerase (tpi-1) from Neurospora crassa (strain ATCC 24698 / 74-OR23-1A / CBS 708.71 / DSM 1257 / FGSC 987).